Consider the following 229-residue polypeptide: Ribonuclease 3 (229 aa).

The RNase III domain occupies 5-127 (LNRLERKLGH…LIGAIYLDAG (123 aa)). Position 40 (glutamate 40) interacts with Mg(2+). The active site involves aspartate 44. Positions 113 and 116 each coordinate Mg(2+). Glutamate 116 is an active-site residue. In terms of domain architecture, DRBM spans 154-224 (DPKTRLQEFL…AAAALVALGV (71 aa)).

The protein belongs to the ribonuclease III family. Homodimer. Mg(2+) is required as a cofactor.

It is found in the cytoplasm. It carries out the reaction Endonucleolytic cleavage to 5'-phosphomonoester.. Functionally, digests double-stranded RNA. Involved in the processing of primary rRNA transcript to yield the immediate precursors to the large and small rRNAs (23S and 16S). Processes some mRNAs, and tRNAs when they are encoded in the rRNA operon. Processes pre-crRNA and tracrRNA of type II CRISPR loci if present in the organism. The sequence is that of Ribonuclease 3 from Azotobacter vinelandii (strain DJ / ATCC BAA-1303).